Here is a 25-residue protein sequence, read N- to C-terminus: TKDPELKQCKKQQKKQQQYDDDDKK.

The interval 1 to 25 is disordered; sequence TKDPELKQCKKQQKKQQQYDDDDKK.

Post-translationally, glycosylated. Expressed in seed.

The sequence is that of Insulin mimetic protein from Cnidoscolus quercifolius.